A 244-amino-acid chain; its full sequence is Rho-related GTP-binding protein RhoE (244 aa).

A GTP-binding site is contributed by 30 to 37 (GDSQCGRT). The short motif at 52-60 (YVPTVFENY) is the Effector region element. GTP-binding positions include 77–81 (DTSGS) and 135–138 (CKSD). Cysteine 241 is modified (cysteine methyl ester). Cysteine 241 is lipidated: S-farnesyl cysteine. Positions 242 to 244 (TVM) are cleaved as a propeptide — removed in mature form.

This sequence belongs to the small GTPase superfamily. Rho family. Binds ROCK1. Interacts with UBXD5.

The protein resides in the cell membrane. In terms of biological role, binds GTP but lacks intrinsic GTPase activity and is resistant to Rho-specific GTPase-activating proteins. The protein is Rho-related GTP-binding protein RhoE (RND3) of Sus scrofa (Pig).